The following is a 425-amino-acid chain: Glutamate-1-semialdehyde 2,1-aminomutase (425 aa).

Lys-265 is modified (N6-(pyridoxal phosphate)lysine).

The protein belongs to the class-III pyridoxal-phosphate-dependent aminotransferase family. HemL subfamily. In terms of assembly, homodimer. Pyridoxal 5'-phosphate serves as cofactor.

It localises to the cytoplasm. It carries out the reaction (S)-4-amino-5-oxopentanoate = 5-aminolevulinate. It functions in the pathway porphyrin-containing compound metabolism; protoporphyrin-IX biosynthesis; 5-aminolevulinate from L-glutamyl-tRNA(Glu): step 2/2. This is Glutamate-1-semialdehyde 2,1-aminomutase from Nitrosospira multiformis (strain ATCC 25196 / NCIMB 11849 / C 71).